The chain runs to 862 residues: Fork head protein homolog 2 (862 aa).

An FHA domain is found at V83–T152. A DNA-binding region (fork-head) is located at residues V339–T430. Disordered stretches follow at residues P498–R528, S611–T663, P698–S730, and E750–K846. Residues P504 to Q520 are compositionally biased toward low complexity. The span at S611–P644 shows a compositional bias: polar residues. Residues T645–S655 show a composition bias toward low complexity. Residue S708 is modified to Phosphoserine. The span at S712–N726 shows a compositional bias: low complexity. Polar residues-rich tracts occupy residues E750–S770 and L778–A788. The span at I804–D829 shows a compositional bias: basic and acidic residues. A compositionally biased stretch (polar residues) spans I830–N844. 2 positions are modified to phosphoserine: S832 and S833.

As to quaternary structure, interacts with MCM1. Interacts with NDD1. Interacts with the origin recognition complex (ORC) composed of ORC1 to ORC6.

It is found in the nucleus. The protein resides in the cytoplasm. Its subcellular location is the cytosol. In terms of biological role, transcription factor that regulates the expression of the CLB2 cluster of genes during the G2/M phase of the mitotic cell cycle. The CLB2 cluster of genes includes mitotic regulators such as CLB1, CLB2, CDC5 and CDC20 as well as SWI5 and ACE2, transcription factors required for the subsequent temporal wave of cell cycle regulated gene expression in the M/G1 phase interval. Involved in HMRa silencing. FKH1 and FKH2 associate with the coding regions of active genes and influence, in opposing ways, transcriptional elongation and termination, and coordinate early transcription elongation and pre-mRNA processing. Both FKH1 and FKH2 play a role as regulators of lifespan in collaboration with the anaphase-promoting complex (APC), likely through combined regulation of stress response, genomic stability, and cell cycle regulation. FKH1 and FKH2 function also in controlling yeast cell morphology by preventing preudohyphal growth. Acts as a rate-limiting replication origin activator via its interaction with the origin recognition complex (ORC). The protein is Fork head protein homolog 2 of Saccharomyces cerevisiae (strain ATCC 204508 / S288c) (Baker's yeast).